Reading from the N-terminus, the 448-residue chain is Chaperone SurA (448 aa).

Residues 1-27 (MKKTLRFAAVASGLVASLITVAPSASA) form the signal peptide. PpiC domains lie at 185-288 (QQDL…RLVE) and 301-399 (IVQT…QVLG).

The protein resides in the periplasm. It catalyses the reaction [protein]-peptidylproline (omega=180) = [protein]-peptidylproline (omega=0). Its function is as follows. Chaperone involved in the correct folding and assembly of outer membrane proteins. Recognizes specific patterns of aromatic residues and the orientation of their side chains, which are found more frequently in integral outer membrane proteins. May act in both early periplasmic and late outer membrane-associated steps of protein maturation. This is Chaperone SurA from Burkholderia mallei (strain ATCC 23344).